Consider the following 544-residue polypeptide: Sialidase (544 aa).

Positions 1 to 22 are cleaved as a signal peptide; sequence MKKAVILFSLFCFLCAIPVVQA. 3 BNR repeats span residues 239-250, 318-329, and 378-389; these read SRSTDGGKTWEK, AKSTDDGKTWSA, and MYSKDGGKNWKM. Residue Glu-399 is part of the active site. Residue Arg-415 coordinates substrate. One copy of the BNR 4 repeat lies at 425–436; that stretch reads AITKDLGKTWTE. Arg-479 lines the substrate pocket. A BNR 5 repeat occupies 485–496; sequence KISLDGGVTWSP.

The protein belongs to the glycosyl hydrolase 33 family.

The protein localises to the periplasm. It catalyses the reaction Hydrolysis of alpha-(2-&gt;3)-, alpha-(2-&gt;6)-, alpha-(2-&gt;8)- glycosidic linkages of terminal sialic acid residues in oligosaccharides, glycoproteins, glycolipids, colominic acid and synthetic substrates.. Its function is as follows. Sialidases have been suggested to be pathogenic factors in microbial infections. The sequence is that of Sialidase (nanH) from Bacteroides fragilis (strain YCH46).